The chain runs to 547 residues: Chaperonin GroEL (547 aa).

ATP is bound by residues Thr30–Pro33, Lys51, Asp87–Thr91, Gly414, Asn478–Ala480, and Asp494.

It belongs to the chaperonin (HSP60) family. In terms of assembly, forms a cylinder of 14 subunits composed of two heptameric rings stacked back-to-back. Interacts with the co-chaperonin GroES.

It is found in the cytoplasm. The enzyme catalyses ATP + H2O + a folded polypeptide = ADP + phosphate + an unfolded polypeptide.. In terms of biological role, together with its co-chaperonin GroES, plays an essential role in assisting protein folding. The GroEL-GroES system forms a nano-cage that allows encapsulation of the non-native substrate proteins and provides a physical environment optimized to promote and accelerate protein folding. The chain is Chaperonin GroEL from Klebsiella pneumoniae.